The sequence spans 89 residues: Insulin (89 aa).

3 disulfides stabilise this stretch: Cys7/Cys75, Cys19/Cys88, and Cys74/Cys79. Positions 33-66 (DVGPLSAFRDLEPPLDTEMEDRFPYRQQLAGSKM) are cleaved as a propeptide — c peptide.

It belongs to the insulin family. In terms of assembly, heterodimer of a B chain and an A chain linked by two disulfide bonds.

It is found in the secreted. Functionally, insulin decreases blood glucose concentration. It increases cell permeability to monosaccharides, amino acids and fatty acids. It accelerates glycolysis, the pentose phosphate cycle, and glycogen synthesis in liver. The polypeptide is Insulin (ins) (Callorhinchus milii (Ghost shark)).